Here is an 82-residue protein sequence, read N- to C-terminus: Transcription elongation factor 1 homolog (82 aa).

Zn(2+)-binding residues include cysteine 26, cysteine 29, cysteine 50, and cysteine 53.

It belongs to the ELOF1 family.

Its subcellular location is the nucleus. Its function is as follows. Transcription elongation factor implicated in the maintenance of proper chromatin structure in actively transcribed regions. The protein is Transcription elongation factor 1 homolog of Manduca sexta (Tobacco hawkmoth).